Consider the following 387-residue polypeptide: tRNA N6-adenosine threonylcarbamoyltransferase (387 aa).

H112 and H116 together coordinate Fe cation. Substrate-binding positions include 134–138, D167, G180, and N325; that span reads LASGG. Residue D353 coordinates Fe cation.

It belongs to the KAE1 / TsaD family. Fe(2+) is required as a cofactor.

It is found in the cytoplasm. It carries out the reaction L-threonylcarbamoyladenylate + adenosine(37) in tRNA = N(6)-L-threonylcarbamoyladenosine(37) in tRNA + AMP + H(+). Required for the formation of a threonylcarbamoyl group on adenosine at position 37 (t(6)A37) in tRNAs that read codons beginning with adenine. Is involved in the transfer of the threonylcarbamoyl moiety of threonylcarbamoyl-AMP (TC-AMP) to the N6 group of A37, together with TsaE and TsaB. TsaD likely plays a direct catalytic role in this reaction. The sequence is that of tRNA N6-adenosine threonylcarbamoyltransferase from Rickettsia prowazekii (strain Madrid E).